Reading from the N-terminus, the 326-residue chain is Glycine N(alpha)-acyltransferase (326 aa).

The protein belongs to the acetyltransferase family.

The enzyme catalyses a (3R)-hydroxyacyl-[ACP] + glycine = a lyso-glycine lipid + holo-[ACP] + H(+). The catalysed reaction is (3R)-hydroxyhexadecanoyl-[ACP] + glycine = N-[(3R)-3-hydroxyhexadecanoyl]-glycine + holo-[ACP] + H(+). Its pathway is lipid metabolism. Its function is as follows. Is involved in the production of glycine lipids (GL), which are phosphorus-free membrane lipids. Catalyzes the first step of GL biosynthesis, i.e. the N-acylation of glycine via addition of a 3-hydroxy fatty acyl group, to form a range of monoacylated glycine (also named lyso-glycine lipids or lyso-GL). As an example, catalyzes the production of commendamide, an N-acylated (3-OH C16:0) derivative of glycine with hemolytic activity and the ability to solubilize cholesterol micelles; this compound can also activate NF-kB through the G-protein coupled receptor GPCR G2A/132. This Phocaeicola vulgatus (strain ATCC 8482 / DSM 1447 / JCM 5826 / CCUG 4940 / NBRC 14291 / NCTC 11154) (Bacteroides vulgatus) protein is Glycine N(alpha)-acyltransferase.